Here is a 41-residue protein sequence, read N- to C-terminus: Cuticle protein 32 (41 aa).

4 repeat units span residues 17-20, 25-28, 31-34, and 38-41.

Functionally, component of the cuticle of migratory locust which contains more than 100 different structural proteins. The polypeptide is Cuticle protein 32 (Locusta migratoria (Migratory locust)).